The sequence spans 289 residues: Serine/threonine-protein phosphatase Pgam5, mitochondrial (289 aa).

It belongs to the phosphoglycerate mutase family. BPG-dependent PGAM subfamily. As to quaternary structure, interacts with Pk92B/ASK1.

It is found in the mitochondrion outer membrane. It catalyses the reaction O-phospho-L-seryl-[protein] + H2O = L-seryl-[protein] + phosphate. The catalysed reaction is O-phospho-L-threonyl-[protein] + H2O = L-threonyl-[protein] + phosphate. Displays phosphatase activity for serine/threonine residues, and dephosphorylates and activates Pk92B kinase. Has apparently no phosphoglycerate mutase activity. This Drosophila yakuba (Fruit fly) protein is Serine/threonine-protein phosphatase Pgam5, mitochondrial.